The chain runs to 255 residues: Cytosolic Fe-S cluster assembly factor Nubp2 homolog (255 aa).

14–21 (GKGGVGKS) serves as a coordination point for ATP. [4Fe-4S] cluster contacts are provided by Cys185 and Cys188.

This sequence belongs to the Mrp/NBP35 ATP-binding proteins family. NUBP2/CFD1 subfamily. Heterotetramer of 2 Nubp1 and 2 Nubp2 chains. The cofactor is [4Fe-4S] cluster.

It is found in the cytoplasm. Component of the cytosolic iron-sulfur (Fe/S) protein assembly (CIA) machinery. Required for maturation of extramitochondrial Fe-S proteins. The Nubp1-Nubp2 heterotetramer forms a Fe-S scaffold complex, mediating the de novo assembly of an Fe-S cluster and its transfer to target apoproteins. This Drosophila persimilis (Fruit fly) protein is Cytosolic Fe-S cluster assembly factor Nubp2 homolog.